The following is an 883-amino-acid chain: Phosphoenolpyruvate carboxylase (883 aa).

Active-site residues include H138 and K546.

This sequence belongs to the PEPCase type 1 family. Mg(2+) serves as cofactor.

The enzyme catalyses oxaloacetate + phosphate = phosphoenolpyruvate + hydrogencarbonate. Its function is as follows. Forms oxaloacetate, a four-carbon dicarboxylic acid source for the tricarboxylic acid cycle. The protein is Phosphoenolpyruvate carboxylase of Salmonella paratyphi A (strain ATCC 9150 / SARB42).